The primary structure comprises 122 residues: Large ribosomal subunit protein uL14 (122 aa).

It belongs to the universal ribosomal protein uL14 family. In terms of assembly, part of the 50S ribosomal subunit. Forms a cluster with proteins L3 and L19. In the 70S ribosome, L14 and L19 interact and together make contacts with the 16S rRNA in bridges B5 and B8.

Binds to 23S rRNA. Forms part of two intersubunit bridges in the 70S ribosome. The chain is Large ribosomal subunit protein uL14 from Halalkalibacterium halodurans (strain ATCC BAA-125 / DSM 18197 / FERM 7344 / JCM 9153 / C-125) (Bacillus halodurans).